Consider the following 182-residue polypeptide: MGDEEKRNRAITARRQHLKSVMLQIAATELEKEESRREAEKQNYLAEHCPPLHIPGSMSEVQELCKQLHAKIDAAEEEKYDMEVRVQKTSKELEDMNQKLFDLRGKFKRPPLRRVRMSADAMLKALLGSKHKVCMDLRANLKQVKKEDTEKERDLRDVGDWRKNIEEKSGMEGRKKMFESES.

Glycine 2 is subject to N-acetylglycine. The interval 2–48 (GDEEKRNRAITARRQHLKSVMLQIAATELEKEESRREAEKQNYLAEH) is involved in binding TNC. Residue threonine 12 is modified to Phosphothreonine. The involved in binding TNC and actin stretch occupies residues 97–117 (NQKLFDLRGKFKRPPLRRVRM). Phosphoserine is present on serine 118.

It belongs to the troponin I family. As to quaternary structure, binds to actin and tropomyosin.

Functionally, troponin I is the inhibitory subunit of troponin, the thin filament regulatory complex which confers calcium-sensitivity to striated muscle actomyosin ATPase activity. The polypeptide is Troponin I, fast skeletal muscle (TNNI2) (Homo sapiens (Human)).